The primary structure comprises 174 residues: Secretory-abundant heat soluble protein 68234 (174 aa).

Positions 1 to 19 (MARFLVALALFGVVAMTAA) are cleaved as a signal peptide. The segment at 26–57 (EWSGKPWLGKFVAEVTDKSENWEAFVDALGLP) is SAHS-c1. An SAHS-c2 region spans residues 72 to 100 (YKQGDHYHHIFALPDKNFEKDIEFTLGQE). An SAHS-c3 region spans residues 113-162 (KYSEDGEKLVADVSIPTKGKTIRSEYEVQGDQLIKTYKTGDIVAKKWFKK).

It belongs to the Secretory-abundant heat soluble protein (SAHS) family.

Its subcellular location is the secreted. Its function is as follows. Secreted heat soluble protein acting as a molecular shield in water-deficient condition. Tardigrade-specific intrinsically disordered proteins (TDPs) are essential for desiccation tolerance by forming non-crystalline amorphous solids upon desiccation, and this vitrified state mirrors their protective capabilities. This is Secretory-abundant heat soluble protein 68234 from Hypsibius exemplaris (Freshwater tardigrade).